A 281-amino-acid chain; its full sequence is NADPH-dependent 7-cyano-7-deazaguanine reductase (281 aa).

Substrate is bound at residue 87-89 (VES). 89–90 (SK) lines the NADPH pocket. Catalysis depends on C188, which acts as the Thioimide intermediate. The active-site Proton donor is D195. 227–228 (HE) lines the substrate pocket. 256 to 257 (RG) is an NADPH binding site.

The protein belongs to the GTP cyclohydrolase I family. QueF type 2 subfamily. In terms of assembly, homodimer.

Its subcellular location is the cytoplasm. The enzyme catalyses 7-aminomethyl-7-carbaguanine + 2 NADP(+) = 7-cyano-7-deazaguanine + 2 NADPH + 3 H(+). Its pathway is tRNA modification; tRNA-queuosine biosynthesis. In terms of biological role, catalyzes the NADPH-dependent reduction of 7-cyano-7-deazaguanine (preQ0) to 7-aminomethyl-7-deazaguanine (preQ1). This Aliivibrio salmonicida (strain LFI1238) (Vibrio salmonicida (strain LFI1238)) protein is NADPH-dependent 7-cyano-7-deazaguanine reductase.